The following is a 314-amino-acid chain: Mitochondrial translation factor 2 (314 aa).

The interval 111–136 (ENSSNIYDPSSPPDSPRKQQTHLGTI) is disordered.

As to quaternary structure, component of the MRH5C complex, composed of mrh5, ppr4, mtf2, and sls1. Proteins mtf2 and sls1 form a subcomplex that serves as a scaffold to bring mrh5 and ppr4 together. The MRH5C complex associates with the small subunit of the mitochondrial ribosome.

Its function is as follows. Translation activation factor that as part of the MRH5C complex specifically recruits cox1 mRNA to the mitochondrial ribosome for translation initiation. The chain is Mitochondrial translation factor 2 from Schizosaccharomyces pombe (strain 972 / ATCC 24843) (Fission yeast).